The primary structure comprises 983 residues: Isoleucine--tRNA ligase (983 aa).

The 'HIGH' region signature appears at 61-71; that stretch reads PYANGELHVGH. Glutamate 608 contacts L-isoleucyl-5'-AMP. The 'KMSKS' region signature appears at 649-653; the sequence is KMSKS. Residue lysine 652 coordinates ATP. Zn(2+) contacts are provided by cysteine 952, cysteine 955, cysteine 972, and cysteine 975.

Belongs to the class-I aminoacyl-tRNA synthetase family. IleS type 1 subfamily. In terms of assembly, monomer. Zn(2+) is required as a cofactor.

Its subcellular location is the cytoplasm. The enzyme catalyses tRNA(Ile) + L-isoleucine + ATP = L-isoleucyl-tRNA(Ile) + AMP + diphosphate. Catalyzes the attachment of isoleucine to tRNA(Ile). As IleRS can inadvertently accommodate and process structurally similar amino acids such as valine, to avoid such errors it has two additional distinct tRNA(Ile)-dependent editing activities. One activity is designated as 'pretransfer' editing and involves the hydrolysis of activated Val-AMP. The other activity is designated 'posttransfer' editing and involves deacylation of mischarged Val-tRNA(Ile). The polypeptide is Isoleucine--tRNA ligase (Gloeobacter violaceus (strain ATCC 29082 / PCC 7421)).